We begin with the raw amino-acid sequence, 445 residues long: UPF0210 protein SPG_0223 (445 aa).

The protein belongs to the UPF0210 family. In terms of assembly, homodimer.

The polypeptide is UPF0210 protein SPG_0223 (Streptococcus pneumoniae serotype 19F (strain G54)).